The primary structure comprises 390 residues: Stearoyl-[acyl-carrier-protein] 9-desaturase 5, chloroplastic (390 aa).

The disordered stretch occupies residues 1-22; that stretch reads MAFAASHTASPSSCGGVAQRRS. The N-terminal 31 residues, 1–31, are a transit peptide targeting the chloroplast; it reads MAFAASHTASPSSCGGVAQRRSNGMSPVVAM. Fe cation-binding residues include glutamate 132, glutamate 170, histidine 173, glutamate 223, glutamate 256, and histidine 259.

It belongs to the fatty acid desaturase type 2 family. As to quaternary structure, homodimer. Fe(2+) serves as cofactor.

Its subcellular location is the plastid. It localises to the chloroplast. The catalysed reaction is octadecanoyl-[ACP] + 2 reduced [2Fe-2S]-[ferredoxin] + O2 + 2 H(+) = (9Z)-octadecenoyl-[ACP] + 2 oxidized [2Fe-2S]-[ferredoxin] + 2 H2O. The protein operates within lipid metabolism; fatty acid metabolism. Its function is as follows. Converts stearoyl-ACP to oleoyl-ACP by introduction of a cis double bond between carbons 9 and 10 of the acyl chain. This Oryza sativa subsp. japonica (Rice) protein is Stearoyl-[acyl-carrier-protein] 9-desaturase 5, chloroplastic.